Reading from the N-terminus, the 239-residue chain is Ribonuclease PH (239 aa).

Residues Arg87 and 125 to 127 (GTR) each bind phosphate.

Belongs to the RNase PH family. Homohexameric ring arranged as a trimer of dimers.

The enzyme catalyses tRNA(n+1) + phosphate = tRNA(n) + a ribonucleoside 5'-diphosphate. Functionally, phosphorolytic 3'-5' exoribonuclease that plays an important role in tRNA 3'-end maturation. Removes nucleotide residues following the 3'-CCA terminus of tRNAs; can also add nucleotides to the ends of RNA molecules by using nucleoside diphosphates as substrates, but this may not be physiologically important. Probably plays a role in initiation of 16S rRNA degradation (leading to ribosome degradation) during starvation. This chain is Ribonuclease PH, found in Azotobacter vinelandii (strain DJ / ATCC BAA-1303).